We begin with the raw amino-acid sequence, 60 residues long: Ribosome biogenesis protein Nop10 (60 aa).

Residues 37–60 (APAPFDPADPHGKYRRALKERRRL) are disordered. Basic residues predominate over residues 49–60 (KYRRALKERRRL).

Belongs to the NOP10 family.

Involved in ribosome biogenesis; more specifically in 18S rRNA pseudouridylation and in cleavage of pre-rRNA. The protein is Ribosome biogenesis protein Nop10 of Halobacterium salinarum (strain ATCC 29341 / DSM 671 / R1).